The following is a 431-amino-acid chain: Protein EARLY STARVATION 1, chloroplastic (431 aa).

A chloroplast-targeting transit peptide spans 1-19 (MAACSRGLVARPFDLTARG). Disordered stretches follow at residues 65–126 (GNKP…DTGI) and 403–431 (GVYP…SPLE). The span at 415–431 (PAPPSDDPPGMPPSPLE) shows a compositional bias: pro residues.

The protein belongs to the ESV1 family.

It localises to the plastid. Its subcellular location is the chloroplast stroma. Its function is as follows. Binds preferentially to highly ordered alpha-glucans, such as starch and crystalline maltodextrins. Involved in the organization of the starch granule matrix, thus influencing starch turnover by modulating the accessibility of starch polymers to modifying and degrading enzymes. Required for the control of starch degradation in leaves and starch distribution in nonphotosynthetic parts. Promotes gravitropic responses, negative in shoots but positive in roots, by facilitating starch granules (statoliths) formation in hypocotyls and roots columella. Facilitates tight packing of starch granules in grains. This Oryza sativa subsp. indica (Rice) protein is Protein EARLY STARVATION 1, chloroplastic.